A 107-amino-acid polypeptide reads, in one-letter code: UPF0145 protein Spro_1658 (107 aa).

Belongs to the UPF0145 family.

The chain is UPF0145 protein Spro_1658 from Serratia proteamaculans (strain 568).